The sequence spans 434 residues: Alpha-enolase (434 aa).

S40 provides a ligand contact to Mg(2+). 2 residues coordinate substrate: H158 and E167. E210 acts as the Proton donor in catalysis. Mg(2+) contacts are provided by D245, E293, and D318. Substrate-binding residues include E293 and D318. The active-site Proton acceptor is the K343. Residues 370 to 373 (SHRS) and K394 contribute to the substrate site.

Belongs to the enolase family. In terms of assembly, homodimer. It depends on Mg(2+) as a cofactor.

The protein resides in the cytoplasm. The catalysed reaction is (2R)-2-phosphoglycerate = phosphoenolpyruvate + H2O. It functions in the pathway carbohydrate degradation; glycolysis; pyruvate from D-glyceraldehyde 3-phosphate: step 4/5. Both an enzyme and a lens structural protein. The chain is Alpha-enolase (ENO1) from Anas platyrhynchos (Mallard).